The chain runs to 268 residues: Helix-loop-helix protein 25 (268 aa).

A compositionally biased stretch (polar residues) spans 1–23 (MPKVIQSSMSDYRSVPYNQTPKS). The tract at residues 1-29 (MPKVIQSSMSDYRSVPYNQTPKSASERKR) is disordered. Residues 92–105 (ERRKVKTEREKIRR) form a basic motif region. Residues 92-149 (ERRKVKTEREKIRRKKQDDCYAELKFFILNKQMGSYEQRLKLERITILEIIIDYIKHN) enclose the bHLH domain. Residues 106–149 (KKQDDCYAELKFFILNKQMGSYEQRLKLERITILEIIIDYIKHN) are helix-loop-helix motif.

Its subcellular location is the nucleus. In terms of biological role, probable transcription factor. Modulates lifespan and also recovery from the developmentally arrested larval state known as dauer, perhaps acting upstream of phosphatase PTEN/daf-18. Regulates expression of genes involved in cell division, cell-cycle regulation, and sexual reproduction, including daf-18. The protein is Helix-loop-helix protein 25 of Caenorhabditis elegans.